The following is a 688-amino-acid chain: Sodium channel and clathrin linker 1 (688 aa).

At alanine 2 the chain carries N-acetylalanine. Residues 59–673 (LIAEYEKHLE…SASQQLSVIT (615 aa)) are a coiled coil. Residue serine 681 is modified to Phosphoserine.

Interacts with SCN10A and clathrin. Identified in a complex containing SCN10A, clathrin and SCLT1. Detected in small neurons in dorsal root ganglia. Detected in C-type fibers of sciatic nerve (at protein level).

The protein resides in the cytoplasm. It localises to the cytoskeleton. Its subcellular location is the microtubule organizing center. The protein localises to the centrosome. It is found in the centriole. In terms of biological role, adapter protein that links SCN10A to clathrin. Regulates SCN10A channel activity, possibly by promoting channel internalization. The protein is Sodium channel and clathrin linker 1 (Sclt1) of Rattus norvegicus (Rat).